Reading from the N-terminus, the 157-residue chain is SsrA-binding protein (157 aa).

Residues Lys-136–Arg-151 are compositionally biased toward basic and acidic residues. Residues Lys-136–Ser-157 form a disordered region.

This sequence belongs to the SmpB family.

It is found in the cytoplasm. Its function is as follows. Required for rescue of stalled ribosomes mediated by trans-translation. Binds to transfer-messenger RNA (tmRNA), required for stable association of tmRNA with ribosomes. tmRNA and SmpB together mimic tRNA shape, replacing the anticodon stem-loop with SmpB. tmRNA is encoded by the ssrA gene; the 2 termini fold to resemble tRNA(Ala) and it encodes a 'tag peptide', a short internal open reading frame. During trans-translation Ala-aminoacylated tmRNA acts like a tRNA, entering the A-site of stalled ribosomes, displacing the stalled mRNA. The ribosome then switches to translate the ORF on the tmRNA; the nascent peptide is terminated with the 'tag peptide' encoded by the tmRNA and targeted for degradation. The ribosome is freed to recommence translation, which seems to be the essential function of trans-translation. The polypeptide is SsrA-binding protein (Cereibacter sphaeroides (strain ATCC 17029 / ATH 2.4.9) (Rhodobacter sphaeroides)).